We begin with the raw amino-acid sequence, 467 residues long: FK506-binding protein 4 (467 aa).

2 disordered regions span residues 64-163 (KATG…GDDD) and 208-357 (GNFV…KPTS). Acidic residues-rich tracts occupy residues 71–80 (DDDDEEEDEY), 147–163 (SDEEESDEESDCCGDDD), and 213–254 (PEDD…DELD). Basic and acidic residues-rich tracts occupy residues 271-287 (APKLVDTSKKGKKRPAE) and 312-332 (QKVEEAKKEEPKKETKSDKKV). The region spanning 381–467 (GDRVGMRYIG…IFDVKLLEIK (87 aa)) is the PPIase FKBP-type domain.

Belongs to the FKBP-type PPIase family. FKBP3/4 subfamily. As to quaternary structure, binds to histones H3 and H4.

The protein resides in the nucleus. The catalysed reaction is [protein]-peptidylproline (omega=180) = [protein]-peptidylproline (omega=0). With respect to regulation, inhibited by both FK506 and rapamycin. Its function is as follows. PPIase that acts as a histone chaperone. Histone proline isomerase that increases the rate of cis-trans isomerization at prolines on the histone H3 N-terminal tail. Proline isomerization influences H3 methylation thereby regulating gene expression. The sequence is that of FK506-binding protein 4 (fkr-4) from Neurospora crassa (strain ATCC 24698 / 74-OR23-1A / CBS 708.71 / DSM 1257 / FGSC 987).